The chain runs to 106 residues: Protein U4 (106 aa).

The helical transmembrane segment at F5–V25 threads the bilayer.

Belongs to the nanovirus U4 protein family.

Its subcellular location is the membrane. This chain is Protein U4 (DNA-U4), found in Cicer arietinum (Chickpea).